The primary structure comprises 525 residues: Chromaffin granule amine transporter (525 aa).

Residues 1-21 (MLRTILDAPQRLLKEGRASRQ) lie on the Cytoplasmic side of the membrane. A helical transmembrane segment spans residues 22–42 (LVLVVVFVALLLDNMLFTVVV). Topologically, residues 43 to 138 (PIVPTFLYDM…TGFLEEEITR (96 aa)) are lumenal, vesicle. Asparagine 58, asparagine 87, and asparagine 104 each carry an N-linked (GlcNAc...) asparagine glycan. A helical membrane pass occupies residues 139–158 (VGVLFASKAVMQLLVNPFVG). Over 159-167 (PLTNRIGYH) the chain is Cytoplasmic. A helical transmembrane segment spans residues 168–188 (IPMFAGFVIMFLSTVMFAFSG). Topologically, residues 189 to 197 (TYTLLFVAR) are lumenal, vesicle. The helical transmembrane segment at 198-218 (TLQGIGSSFSSVAGLGMLASV) threads the bilayer. Topologically, residues 219–227 (YTDDHERGR) are cytoplasmic. Residues 228-250 (AMGTALGGLALGLLVGAPFGSVM) form a helical membrane-spanning segment. At 251-256 (YEFVGK) the chain is on the lumenal, vesicle side. A helical transmembrane segment spans residues 257 to 279 (SAPFLILAFLALLDGALQLCILQ). At 280–299 (PSKVSPESAKGTPLFMLLKD) the chain is on the cytoplasmic side. The chain crosses the membrane as a helical span at residues 300–319 (PYILVAAGSICFANMGVAIL). Topologically, residues 320-335 (EPTLPIWMMQTMCSPK) are lumenal, vesicle. The helical transmembrane segment at 336-360 (WQLGLAFLPASVSYLIGTNLFGVLA) threads the bilayer. Over 361–365 (NKMGR) the chain is Cytoplasmic. A helical membrane pass occupies residues 366 to 386 (WLCSLIGMLVVGTSLLCVPLA). Residues 387–397 (HNIFGLIGPNA) are Lumenal, vesicle-facing. The helical transmembrane segment at 398 to 418 (GLGLAIGMVDSSMMPIMGHLV) threads the bilayer. Residues 419–422 (DLRH) lie on the Cytoplasmic side of the membrane. A helical membrane pass occupies residues 423–443 (TSVYGSVYAIADVAFCMGFAI). The Lumenal, vesicle segment spans residues 444 to 448 (GPSTG). The chain crosses the membrane as a helical span at residues 449-470 (GAIVKAIGFPWLMVITGVINIV). Residues 471–525 (YAPLCYYLRSPPAKEEKLAILSQDCPMETRMYATQKPTKEFPLGEDSDEEPDHEE) are Cytoplasmic-facing. A disordered region spans residues 503 to 525 (ATQKPTKEFPLGEDSDEEPDHEE). Residues 513–525 (LGEDSDEEPDHEE) are compositionally biased toward acidic residues.

This sequence belongs to the major facilitator superfamily. Vesicular transporter family. As to expression, expressed primarily in neuroendocrine tissues. Highly expressed in chromaffin cells of the adrenal medulla (at protein level). Detected in peripheral sympathetic ganglia (at protein level). Found in some paracrine cells in stomach and duodenum (at protein level). Expressed in substantia nigra. In terms of tissue distribution, expressed in gastrointestinal tract.

Its subcellular location is the cytoplasmic vesicle. It localises to the secretory vesicle membrane. The protein localises to the secretory vesicle. It is found in the synaptic vesicle membrane. The protein resides in the endoplasmic reticulum membrane. It carries out the reaction serotonin(in) + 2 H(+)(out) = serotonin(out) + 2 H(+)(in). The enzyme catalyses (R)-noradrenaline(in) + 2 H(+)(out) = (R)-noradrenaline(out) + 2 H(+)(in). It catalyses the reaction dopamine(in) + 2 H(+)(out) = dopamine(out) + 2 H(+)(in). Strongly inhibited by reserpine. Also inhibited to a lesser extent by ketanserin and fenfluramine. Not significantly inhibited by tetrabenazine. Functionally, electrogenic antiporter that exchanges one cationic monoamine with two intravesicular protons across the membrane of secretory and synaptic vesicles. Uses the electrochemical proton gradient established by the V-type proton-pump ATPase to accumulate high concentrations of monoamines inside the vesicles prior to their release via exocytosis. Transports catecholamines and indolamines with higher affinity for serotonin. Regulates the transvesicular monoaminergic gradient that determines the quantal size. Mediates presynaptic monoaminergic vesicle transport in the amygdala and prefrontal brain regions related with emotion processing in response to environmental stimuli. Its function is as follows. Unable to uptake serotonin. The polypeptide is Chromaffin granule amine transporter (SLC18A1) (Homo sapiens (Human)).